A 122-amino-acid polypeptide reads, in one-letter code: NADPH-dependent 7-cyano-7-deazaguanine reductase (122 aa).

The active-site Thioimide intermediate is the Cys34. The Proton donor role is filled by Asp41. Substrate is bound by residues 56 to 58 (VEL) and 75 to 76 (HE).

The protein belongs to the GTP cyclohydrolase I family. QueF type 1 subfamily.

It is found in the cytoplasm. The enzyme catalyses 7-aminomethyl-7-carbaguanine + 2 NADP(+) = 7-cyano-7-deazaguanine + 2 NADPH + 3 H(+). It functions in the pathway tRNA modification; tRNA-queuosine biosynthesis. Catalyzes the NADPH-dependent reduction of 7-cyano-7-deazaguanine (preQ0) to 7-aminomethyl-7-deazaguanine (preQ1). The chain is NADPH-dependent 7-cyano-7-deazaguanine reductase from Anaeromyxobacter dehalogenans (strain 2CP-1 / ATCC BAA-258).